The following is a 520-amino-acid chain: RING-type E3 ubiquitin-protein ligase PPIL2 (520 aa).

One can recognise a U-box domain in the interval 35–108 (RRLPFDHCSL…GKYHCPVLFT (74 aa)). A coiled-coil region spans residues 197-217 (LKNTNAETRETLQELYKEFKG). A Glycyl lysine isopeptide (Lys-Gly) (interchain with G-Cter in SUMO2) cross-link involves residue lysine 216. The PPIase cyclophilin-type domain occupies 278-433 (KKGYVRLHTN…EEIRIDATTV (156 aa)). The segment at 456-520 (APETKVKSSQ…SRGFGDFSSW (65 aa)) is disordered. Low complexity predominate over residues 463–474 (SSQPQAGSQGPQ). At serine 470 the chain carries Phosphoserine. Lysine 482 carries the N6-acetyllysine modification.

This sequence belongs to the cyclophilin-type PPIase family. PPIL2 subfamily. In terms of assembly, component of the minor spliceosome, which splices U12-type introns. Within this complex, interacts with PRPF8/PRP8, EFTUD2/SNU114 and PLRG1. Interacts with isoform 2 of BSG. Interacts (via the PPIase cyclophilin-type domain) with CRNKL1; they may form a trimeric complex with HSP90. In terms of tissue distribution, highest expression in thymus, pancreas and testis. Also detected in heart, placenta, lung, liver, skeletal muscle, kidney, spleen, prostate, ovary, small intestine and colon. Poorly detected in brain and leukocytes. Strong protein expression in lymph node (cortical, paracortical and medullar regions), thyroid (follicular epithelial cells), testis (developing spermatozoa), stomach (cells lining the gastric pit), pancreas, kidney (proximal and distal-tubule cells and collecting duct cells but not in glomeruli), endometrium and colon (goblet cells). Moderate protein expression in spleen, prostate (epithelium and squamous cell carcinomas), placenta and adrenal gland. Weak protein expression in liver, heart, breast, ovary, and lung. No protein expression in brain and bladder. High protein expression in most lymphomas and melanomas.

It localises to the nucleus. The enzyme catalyses S-ubiquitinyl-[E2 ubiquitin-conjugating enzyme]-L-cysteine + [acceptor protein]-L-lysine = [E2 ubiquitin-conjugating enzyme]-L-cysteine + N(6)-ubiquitinyl-[acceptor protein]-L-lysine.. It functions in the pathway protein modification; protein ubiquitination. Its function is as follows. Has a ubiquitin-protein ligase activity acting as an E3 ubiquitin protein ligase or as an ubiquitin-ubiquitin ligase promoting elongation of ubiquitin chains on substrates. By mediating 'Lys-48'-linked polyubiquitination of proteins could target them for proteasomal degradation. May also function as a chaperone, playing a role in transport to the cell membrane of BSG/Basigin for instance. Probable inactive PPIase with no peptidyl-prolyl cis-trans isomerase activity. As a component of the minor spliceosome, involved in the splicing of U12-type introns in pre-mRNAs. This is RING-type E3 ubiquitin-protein ligase PPIL2 from Homo sapiens (Human).